Consider the following 66-residue polypeptide: Alpha-like toxin Bom3 (66 aa).

The region spanning 2–66 (RDGYIAQPEN…PIVVGGEKCH (65 aa)) is the LCN-type CS-alpha/beta domain. Disulfide bonds link Cys12/Cys65, Cys16/Cys37, Cys23/Cys47, and Cys27/Cys49.

It belongs to the long (4 C-C) scorpion toxin superfamily. Sodium channel inhibitor family. Alpha subfamily. As to expression, expressed by the venom gland.

It is found in the secreted. Functionally, alpha toxins bind voltage-independently at site-3 of sodium channels (Nav) and inhibit the inactivation of the activated channels, thereby blocking neuronal transmission. As it competes neither with the classical alpha-toxin AaH2 nor the beta-toxin Css2, this toxin is an alpha-like toxin. The polypeptide is Alpha-like toxin Bom3 (Buthus occitanus mardochei (Moroccan scorpion)).